The primary structure comprises 408 residues: Putative glutamate--cysteine ligase 2 (408 aa).

This sequence belongs to the glutamate--cysteine ligase type 2 family. YbdK subfamily.

The enzyme catalyses L-cysteine + L-glutamate + ATP = gamma-L-glutamyl-L-cysteine + ADP + phosphate + H(+). In terms of biological role, ATP-dependent carboxylate-amine ligase which exhibits weak glutamate--cysteine ligase activity. This Bradyrhizobium sp. (strain BTAi1 / ATCC BAA-1182) protein is Putative glutamate--cysteine ligase 2.